Reading from the N-terminus, the 292-residue chain is ATP synthase gamma chain (292 aa).

This sequence belongs to the ATPase gamma chain family. F-type ATPases have 2 components, CF(1) - the catalytic core - and CF(0) - the membrane proton channel. CF(1) has five subunits: alpha(3), beta(3), gamma(1), delta(1), epsilon(1). CF(0) has three main subunits: a, b and c.

The protein resides in the cell membrane. Produces ATP from ADP in the presence of a proton gradient across the membrane. The gamma chain is believed to be important in regulating ATPase activity and the flow of protons through the CF(0) complex. The sequence is that of ATP synthase gamma chain from Prosthecochloris aestuarii (strain DSM 271 / SK 413).